Reading from the N-terminus, the 67-residue chain is Protein AaeX (67 aa).

Transmembrane regions (helical) follow at residues 3–23 and 43–63; these read VLPV…ELII and LVWH…YLVS.

Belongs to the AaeX family.

It is found in the cell membrane. In Pantoea vagans (strain C9-1) (Pantoea agglomerans (strain C9-1)), this protein is Protein AaeX.